A 710-amino-acid chain; its full sequence is E3 ubiquitin-protein ligase TRIM9 (710 aa).

An RING-type zinc finger spans residues 10–50 (CPVCGSFYREPIILPCSHNLCQACARNILVQTPESESPQSR). A Phosphothreonine modification is found at Thr-41. Phosphoserine is present on residues Ser-44, Ser-46, Ser-49, and Ser-53. 2 B box-type zinc fingers span residues 163–212 (AAAL…LVPP) and 224–266 (RKVS…VKAL). Zn(2+) contacts are provided by Cys-168, Cys-171, Cys-193, His-198, Cys-229, His-232, Cys-252, and His-258. Positions 273 to 340 (HKSQLSQALN…KAQLLARVNK (68 aa)) form a coiled coil. The COS domain maps to 374–432 (IKENDPSGFLQISDALIRRVHLTEDQWGKGTLTPRMTTDFDLSLDNSPLLQSIHQLDFV). The Fibronectin type-III domain occupies 440-535 (VPATPILQLE…KTLVLQTSEV (96 aa)). One can recognise a B30.2/SPRY domain in the interval 533 to 702 (SEVAWFAFDP…LHTGLPVPDF (170 aa)).

Interacts with SNAP25. Post-translationally, auto-ubiquitinated. As to expression, brain (at protein level). Expressed in fetal and adult brain.

The protein localises to the cytoplasmic vesicle. Its subcellular location is the secretory vesicle. It localises to the synaptic vesicle. The protein resides in the synapse. It is found in the cytoplasm. The protein localises to the cytoskeleton. Its subcellular location is the cell projection. It localises to the dendrite. It carries out the reaction S-ubiquitinyl-[E2 ubiquitin-conjugating enzyme]-L-cysteine + [acceptor protein]-L-lysine = [E2 ubiquitin-conjugating enzyme]-L-cysteine + N(6)-ubiquitinyl-[acceptor protein]-L-lysine.. It functions in the pathway protein modification; protein ubiquitination. E3 ubiquitin-protein ligase which ubiquitinates itself in cooperation with an E2 enzyme UBE2D2/UBC4 and serves as a targeting signal for proteasomal degradation. May play a role in regulation of neuronal functions. May act as a regulator of synaptic vesicle exocytosis by controlling the availability of SNAP25 for the SNARE complex formation. In Rattus norvegicus (Rat), this protein is E3 ubiquitin-protein ligase TRIM9 (Trim9).